The chain runs to 115 residues: NADH-ubiquinone oxidoreductase chain 3 (115 aa).

Transmembrane regions (helical) follow at residues 4-24, 55-75, and 86-106; these read LTALLINITLSLCLITIAFWL, FFLVAITFLLFDLEIALLLPL, and VMMLTSFILVSVLALGLAYEW.

The protein belongs to the complex I subunit 3 family. In terms of assembly, core subunit of respiratory chain NADH dehydrogenase (Complex I) which is composed of 45 different subunits. Interacts with TMEM186. Interacts with TMEM242.

It localises to the mitochondrion inner membrane. The enzyme catalyses a ubiquinone + NADH + 5 H(+)(in) = a ubiquinol + NAD(+) + 4 H(+)(out). Its function is as follows. Core subunit of the mitochondrial membrane respiratory chain NADH dehydrogenase (Complex I) which catalyzes electron transfer from NADH through the respiratory chain, using ubiquinone as an electron acceptor. Essential for the catalytic activity of complex I. The protein is NADH-ubiquinone oxidoreductase chain 3 of Isthmomys pirrensis (Mount Pirri Isthmus rat).